Here is a 223-residue protein sequence, read N- to C-terminus: Ion-translocating oxidoreductase complex subunit E (223 aa).

7 helical membrane passes run 17-37, 38-58, 68-88, 91-111, 124-144, 156-176, and 181-201; these read SLVQLLGLCPILAMTTNTINA, IGLGITTTFVLTITNSIISIL, IPIYMIIVSSTVTCIEMLLHA, FNLYQSLGVFIPLIVTNCIVV, VISFLDGMSIGLGSTFAMFVI, FLFGANKIFNVLDHSFFFTFI, and TIILAMLPSGGFLVLGFVIAF.

The protein belongs to the NqrDE/RnfAE family. In terms of assembly, the complex is composed of six subunits: RnfA, RnfB, RnfC, RnfD, RnfE and RnfG.

The protein resides in the cell inner membrane. Part of a membrane-bound complex that couples electron transfer with translocation of ions across the membrane. The polypeptide is Ion-translocating oxidoreductase complex subunit E (Buchnera aphidicola subsp. Schizaphis graminum (strain Sg)).